The following is a 175-amino-acid chain: B9 domain-containing protein 2 (175 aa).

Positions 2-118 constitute a C2 B9-type domain; that stretch reads AEVHVIGQIM…DCPTWRPLGS (117 aa).

It belongs to the B9D family. In terms of assembly, part of the tectonic-like complex (also named B9 complex). Interacts with TUBG1.

The protein localises to the cytoplasm. The protein resides in the cytoskeleton. Its subcellular location is the cilium basal body. It is found in the cilium axoneme. It localises to the nucleus. In terms of biological role, component of the tectonic-like complex, a complex localized at the transition zone of primary cilia and acting as a barrier that prevents diffusion of transmembrane proteins between the cilia and plasma membranes. The sequence is that of B9 domain-containing protein 2 (B9D2) from Bos taurus (Bovine).